Reading from the N-terminus, the 469-residue chain is Adenosylhomocysteinase (469 aa).

Thr-63, Asp-139, and Glu-164 together coordinate substrate. 165–167 provides a ligand contact to NAD(+); sequence TTT. Residues Lys-194 and Asp-198 each coordinate substrate. NAD(+)-binding positions include Asn-199, 228 to 233, Glu-251, Asn-300, 321 to 323, and Asn-375; these read GYGDVG and IGH.

It belongs to the adenosylhomocysteinase family. The cofactor is NAD(+).

Its subcellular location is the cytoplasm. The catalysed reaction is S-adenosyl-L-homocysteine + H2O = L-homocysteine + adenosine. It participates in amino-acid biosynthesis; L-homocysteine biosynthesis; L-homocysteine from S-adenosyl-L-homocysteine: step 1/1. In terms of biological role, may play a key role in the regulation of the intracellular concentration of adenosylhomocysteine. The protein is Adenosylhomocysteinase of Ectopseudomonas mendocina (strain ymp) (Pseudomonas mendocina).